We begin with the raw amino-acid sequence, 1210 residues long: MIDRKALLNDLKQQVKAVEADLGKQVKALDEVGARLRAEYDQARKLGRTAATWNSWLDERVTQVAVAWVLGTVFVRFCEDNRLIPEPYVTGPDNYRRDLAETRYDVYVEADDDPTYRGWLRRAFAELGDGQAGRLLFDSDHNPLYQIPLSHDGARELVEFWRQRDEEGALVHDFTDPLSADGTEGWGTRFLGDLYQDLSEAARKTYALLQTPEFVEEFILDRTMNPAVREFGYEELKMIDPTCGSGHFVLGAFRRLVRLGGENQPGKDVHQRVRAALDSVHGVDINPFAVAIARFRLLVAAMAASGVRTLDEASKYEWPVHLAVGDSLIKSGSQQGSLFGESDDDLTDELAEFKYATEDVGEHPEMLRPGRYHVVVGNPPYITVKDKSLNALYRELYPACAGKYALSVPFAQRFFELAKREDAEGSGYGMVGQITANSFMKREFGTKLIEGYFGHAVELTEVIDTSGAYIPGHGTPTVILVGTRRGGDGRSPVIRTVRSVQGEPVAPENAEEGLVWRAIVEQIDKPGSVSQWVSVDDLDREKYFSKQPWVLADGGQEMLEQINAASHAILKRDLHRIGFYGIMGADDAMSAVPRTFRRNNAESEYVRRLVVGDEVRDFRIADGDDAFHPYGSQRDLVGPDAFPNLAAWLWPYRTELGGRATFSGGTYFADGRPWWEWHQLPKDVGAHAWSLNFAFVATHNHVVLDRSGCAFTRTAPVIKLREGASEEEHLRLLGLLNSSTAGFWLKMVSYPKGGDPVGDEGARVSVHPWSDRYEFTGTKLQEFPLPSEYPTGLGTALDALAQRLAAASPAAVAAEAVPIAGLLREARTRWEAIRSRMIALQEEMDWQVYSLYKLHSEDLRVSEDPDDTNIPELTLGGRAFEIVLARRVAAGEASDEWFKRHNSTPITEIPAHWPAPYREIVQKRIDAIESNRAIGMVERPEYKRRWATEGWDALQEKALRSWLLDRMENRDLWCDENGQPTILTLARLTDALSRDEDFASVAKLYAPRKELAKVVAELITDEHVPFLSALRYKPSGLKKRADWEEVWDLQRKEDAAPDEPAKRKIRDSIPVPPKYTSADFLRPSYWKARGKLDVPKERFVSYGQTNAATPELYGWAGWDHREQAQALATYFTNTALSTKEITPFLAGLLELQPWLSQWHNEFDMLYSGSPADFFAGYRQQKQGEHGLTDDDLRGWRPPAATRRRRAAAKQ.

Positions 1181 to 1194 (KQGEHGLTDDDLRG) are enriched in basic and acidic residues. The interval 1181-1210 (KQGEHGLTDDDLRGWRPPAATRRRRAAAKQ) is disordered. The segment covering 1201–1210 (TRRRRAAAKQ) has biased composition (basic residues).

It belongs to the methyltransferase superfamily. PglX adenine methyltransferase family.

The catalysed reaction is a 2'-deoxyadenosine in DNA + S-adenosyl-L-methionine = an N(6)-methyl-2'-deoxyadenosine in DNA + S-adenosyl-L-homocysteine + H(+). BREX systems (bacteriophage exclusion) provide immunity against bacteriophage. Part of a type 2 BREX system. Probably a DNA methyltransferase, it methylates phage DNA in vitro in an S-adenosyl-L-methionine-dependent manner. Previously called the phage growth limitation (Pgl) system, it confers protection against bacteriophage phiC31. The bacteria allows one cycle of phage infection, but subsequent cycles are impaired, protecting the original bacterial colony. The system undergoes high rates (10(-3) to 10(-4)) of phase reversion, i.e. loss and regain of phiC31 resistance. When the pglW-pglX-pglY-pglZ genes are transformed into a susceptible S.lividans (strain 1326) they confer resistance to infection by phage phiC31 and phiBT1; all 4 genes are necessary. In terms of biological role, probably a toxic component of a type II toxin-antitoxin (TA) system. The toxic activity is inhibited by its cognate antitoxin PglZ. Its function is as follows. May be a subtypes G and alpha restriction enzyme that recognizes and cleaves an unknown sequence. Methylates an adenine residue in the same sequence. The chain is Adenine-specific methyltransferase PglX from Streptomyces coelicolor (strain ATCC BAA-471 / A3(2) / M145).